Here is a 447-residue protein sequence, read N- to C-terminus: Putative branched-chain amino acid carrier protein SE_1090 (447 aa).

12 consecutive transmembrane segments (helical) span residues 5–25 (TWII…LIFP), 40–60 (ILAF…VGAL), 74–94 (PRFS…LFAI), 114–134 (GNLA…YLCL), 143–163 (IGSL…IKGF), 193–213 (GYLT…VNAI), 229–249 (IIAG…LGYI), 290–310 (LLGI…IVSV), 317–337 (ILPK…SFIL), 350–370 (VPVL…ILIA), 382–402 (IPLI…QGWI), and 417–437 (LEWF…SYFV).

It belongs to the branched chain amino acid transporter family.

It localises to the cell membrane. In terms of biological role, component of the transport system for branched-chain amino acids (leucine, isoleucine and valine), which is coupled to a proton motive force. The chain is Putative branched-chain amino acid carrier protein SE_1090 from Staphylococcus epidermidis (strain ATCC 12228 / FDA PCI 1200).